Consider the following 265-residue polypeptide: Ni-sirohydrochlorin a,c-diamide reductive cyclase complex, component CfbC (265 aa).

It belongs to the NifH/BchL/ChlL family. In terms of assembly, homodimer. The Ni-sirohydrochlorin a,c-diamide reductive cyclase complex is composed of a NifH homolog component CfbC and a NifD homolog component CfbD. [4Fe-4S] cluster is required as a cofactor.

The catalysed reaction is Ni-sirohydrochlorin a,c-diamide + 3 AH2 + ATP + H2O = 15,17(3)-seco-F430-17(3)-acid + 3 A + ADP + phosphate. In terms of biological role, involved in the biosynthesis of the unique nickel-containing tetrapyrrole coenzyme F430, the prosthetic group of methyl-coenzyme M reductase (MCR), which plays a key role in methanogenesis and anaerobic methane oxidation. Catalyzes both the six-electron reduction of the tetrahydroporphyrin ring system and the gamma-lactamization of the c-acetamide side chain of Ni-sirohydrochlorin a,c-diamide to yield 15,17(3)-seco-F430-17(3)-acid (seco-F430), the last intermediate in the biosynthesis of the coenzyme F430. In Methanosarcina barkeri (strain Fusaro / DSM 804), this protein is Ni-sirohydrochlorin a,c-diamide reductive cyclase complex, component CfbC.